The chain runs to 960 residues: Importin alpha re-exporter (960 aa).

HEAT repeat units follow at residues 1-33, 34-73, 74-120, 121-157, 158-220, 221-278, 279-323, 324-392, 393-445, 446-489, 490-528, 529-586, 587-630, 631-674, 675-716, 717-751, 752-794, and 795-826; these read MSDL…LETQ, DGFG…VDEN, GNHL…FPDR, WPTL…WRPL, FRSD…NCQD, IPEF…TRYE, DVFG…TRIP, KYFE…KEKN, EVLV…GVSS, TNNL…RNQL, TKAQ…TIRE, SNTS…TSED, SIQP…LNYT, QRQN…QSAT, IPES…SSIF, PDLV…LLID, MNRL…NKLG, and SDFL…PTIG. In terms of domain architecture, Importin N-terminal spans 23-96; the sequence is SERNLRQLET…KKEIVPLMIS (74 aa). Residues 366–381 carry the Nuclear localization signal motif; that stretch reads RRDLEGSDTDTRRRAC. Residues 827–928 form an HEAT 19; with insert repeat; sequence NLLDRKIALI…RLYVAEALNK (102 aa). The HEAT 20 repeat unit spans residues 929–960; the sequence is YNAISGNTFLNTILPQLTQENQVKLNQLLVGN.

The protein belongs to the XPO2/CSE1 family. Binds with high affinity to SRP1 only in the presence of RanGTP. The complex is dissociated by the RanGTP-binding protein YRB1.

The protein resides in the cytoplasm. It localises to the nucleus. In terms of biological role, export receptor for importin alpha (SRP1). Mediates importin-alpha re-export from the nucleus to the cytoplasm after import substrates have been released into the nucleoplasm. In Saccharomyces cerevisiae (strain ATCC 204508 / S288c) (Baker's yeast), this protein is Importin alpha re-exporter (CSE1).